The primary structure comprises 512 residues: Endo-1,4-beta-xylanase A (512 aa).

Residues 1-30 (MKRKVKKMAAMATSIIMAIMIILHSIPVLA) form the signal peptide. The GH11 domain occupies 33–228 (IIYDNETGTH…SSGYANVYKN (196 aa)). Glutamate 124 acts as the Nucleophile in catalysis. The active-site Proton donor is the glutamate 215. CBM6 domains are found at residues 251–371 (SIIE…FIFS) and 388–508 (SIIQ…FVFS). Residues glutamate 254 and glutamate 256 each contribute to the Ca(2+) site. Threonine 271 contributes to the D-xylotriose binding site. Arginine 276 provides a ligand contact to Ca(2+). Repeat 1 spans residues 279-340 (GYIENGNTVT…SSTGSWNTYQ (62 aa)). A 2 X 61 AA approximate repeats region spans residues 279 to 477 (GYIENGNTVT…GSTGSFDTYR (199 aa)). D-xylotriose contacts are provided by tyrosine 280, asparagine 337, and asparagine 364. The D-xylobiose site is built by tyrosine 280, asparagine 337, and asparagine 364. The Ca(2+) site is built by aspartate 366, glutamine 391, glutamate 393, and serine 413. Repeat 2 spans residues 416-477 (GYIENGYSTT…GSTGSFDTYR (62 aa)). D-xylotriose is bound by residues tyrosine 417, aspartate 474, and asparagine 501. Ca(2+) is bound at residue aspartate 503.

This sequence belongs to the glycosyl hydrolase 11 (cellulase G) family.

It catalyses the reaction Endohydrolysis of (1-&gt;4)-beta-D-xylosidic linkages in xylans.. Its pathway is glycan degradation; xylan degradation. The sequence is that of Endo-1,4-beta-xylanase A (xynA) from Thermoclostridium stercorarium (Clostridium stercorarium).